We begin with the raw amino-acid sequence, 432 residues long: Serine hydroxymethyltransferase (432 aa).

Residues Leu-117 and Gly-121–Leu-123 contribute to the (6S)-5,6,7,8-tetrahydrofolate site. An N6-(pyridoxal phosphate)lysine modification is found at Lys-226. Residue Ser-366 to Phe-368 coordinates (6S)-5,6,7,8-tetrahydrofolate.

The protein belongs to the SHMT family. In terms of assembly, homodimer. Pyridoxal 5'-phosphate serves as cofactor.

It localises to the cytoplasm. It carries out the reaction (6R)-5,10-methylene-5,6,7,8-tetrahydrofolate + glycine + H2O = (6S)-5,6,7,8-tetrahydrofolate + L-serine. The protein operates within one-carbon metabolism; tetrahydrofolate interconversion. It functions in the pathway amino-acid biosynthesis; glycine biosynthesis; glycine from L-serine: step 1/1. Catalyzes the reversible interconversion of serine and glycine with tetrahydrofolate (THF) serving as the one-carbon carrier. This reaction serves as the major source of one-carbon groups required for the biosynthesis of purines, thymidylate, methionine, and other important biomolecules. Also exhibits THF-independent aldolase activity toward beta-hydroxyamino acids, producing glycine and aldehydes, via a retro-aldol mechanism. The chain is Serine hydroxymethyltransferase from Salinibacter ruber (strain DSM 13855 / M31).